The following is a 138-amino-acid chain: NADH dehydrogenase [ubiquinone] 1 alpha subcomplex subunit N7BM (138 aa).

The protein belongs to the complex I NDUFA12 subunit family. Complex I is composed of 42 different subunits.

It localises to the mitochondrion inner membrane. In terms of biological role, accessory subunit of the mitochondrial membrane respiratory chain NADH dehydrogenase (Complex I), that is believed not to be involved in catalysis. Complex I functions in the transfer of electrons from NADH to the respiratory chain. The immediate electron acceptor for the enzyme is believed to be ubiquinone. The chain is NADH dehydrogenase [ubiquinone] 1 alpha subcomplex subunit N7BM from Yarrowia lipolytica (strain CLIB 122 / E 150) (Yeast).